The following is a 359-amino-acid chain: Peptide chain release factor 1 (359 aa).

Q235 carries the post-translational modification N5-methylglutamine. The segment at 283–309 (QKAESERSQARRSQVGSGDRSERIRTY) is disordered.

This sequence belongs to the prokaryotic/mitochondrial release factor family. Post-translationally, methylated by PrmC. Methylation increases the termination efficiency of RF1.

It localises to the cytoplasm. Functionally, peptide chain release factor 1 directs the termination of translation in response to the peptide chain termination codons UAG and UAA. The chain is Peptide chain release factor 1 from Brucella melitensis biotype 2 (strain ATCC 23457).